A 220-amino-acid chain; its full sequence is Adenylate kinase (220 aa).

10–15 provides a ligand contact to ATP; sequence GAGKGT. The segment at 30–59 is NMP; the sequence is STGDMLRAAVKAGTPLGVEAKGYMDAGKLV. Residues threonine 31, arginine 36, 57 to 59, 85 to 88, and glutamine 92 each bind AMP; these read KLV and GFPR. Positions 122–159 are LID; it reads GRRTHPASGRTYHVKFNPPKVEGHDDVTGEPLIQRDDD. ATP contacts are provided by residues arginine 123 and 132-133; that span reads TY. Positions 156 and 167 each coordinate AMP. Glycine 206 lines the ATP pocket.

It belongs to the adenylate kinase family. Monomer.

The protein localises to the cytoplasm. It catalyses the reaction AMP + ATP = 2 ADP. Its pathway is purine metabolism; AMP biosynthesis via salvage pathway; AMP from ADP: step 1/1. Functionally, catalyzes the reversible transfer of the terminal phosphate group between ATP and AMP. Plays an important role in cellular energy homeostasis and in adenine nucleotide metabolism. The polypeptide is Adenylate kinase (Burkholderia cenocepacia (strain HI2424)).